The chain runs to 502 residues: MSIRAEEISALIKQQIENYESQIQVSDVGTVIQIGDGIARAHGLDNVMSGELVEFANAVMGMALNLEENNVGIVILGPYTGIKEGDEVRRTGRIMEVPVGEALIGRVVNPLGQPVDGLGPVETTETRPIESPAPGVMDRRSVHEPLQTGIKAIDALVPIGRGQRELIIGDRQTGKTSVAIDTIINQKDQNMICIYVAIGQKESTVRTVVETLRKHGALDYTIVVTASASQPAPLLFLAPYAGVAMGEYFMYKGQHVLVVYDDLSKQAAAYRELSLFVRRPPGREAYPGDIFYLHSRLLERAAKLSDAKGGGSLTALPFVETQAGDISAYIPTNVISITDGQIFLQSDLFFSRVRPAINAGLSVSRVGGAAQIKAMKKVAGTLRLDLAAYRELEAFAQFGSDLDKATQAKLARGARTVEVLKQDLHQPIPVEKQVLIIYALTRGFLDDIPVKDVRRFEKEFYLWLDQNGQHLLEHIRTTKDLPNEDDLNQAIEAFKKTFVVSQ.

The disordered stretch occupies residues 115–137 (VDGLGPVETTETRPIESPAPGVM). Residue 169 to 176 (GDRQTGKT) coordinates ATP.

This sequence belongs to the ATPase alpha/beta chains family. F-type ATPases have 2 components, CF(1) - the catalytic core - and CF(0) - the membrane proton channel. CF(1) has five subunits: alpha(3), beta(3), gamma(1), delta(1), epsilon(1). CF(0) has three main subunits: a(1), b(2) and c(9-12). The alpha and beta chains form an alternating ring which encloses part of the gamma chain. CF(1) is attached to CF(0) by a central stalk formed by the gamma and epsilon chains, while a peripheral stalk is formed by the delta and b chains.

It is found in the cell membrane. The enzyme catalyses ATP + H2O + 4 H(+)(in) = ADP + phosphate + 5 H(+)(out). Its function is as follows. Produces ATP from ADP in the presence of a proton gradient across the membrane. The alpha chain is a regulatory subunit. This chain is ATP synthase subunit alpha, found in Geobacillus stearothermophilus (Bacillus stearothermophilus).